We begin with the raw amino-acid sequence, 53 residues long: Light-harvesting protein B800/850/890 beta-1 chain (53 aa).

Residues 1–19 (ADNMSLTGLSDEEAKEFHS) are Cytoplasmic-facing. His18 and His36 together coordinate a bacteriochlorophyll. Residues 20-42 (IFMQSFLIFTAVAVVAHFLAWAW) form a helical membrane-spanning segment. Residues 43-53 (RPWIPGAEGYG) are Periplasmic-facing.

Belongs to the antenna complex beta subunit family. In terms of assembly, the core complex is formed by different alpha and beta chains, binding bacteriochlorophyll molecules, and arranged most probably in tetrameric structures disposed around the reaction center. The non-pigmented gamma chains may constitute additional components.

The protein localises to the cell inner membrane. In terms of biological role, antenna complexes are light-harvesting systems, which transfer the excitation energy to the reaction centers. The protein is Light-harvesting protein B800/850/890 beta-1 chain of Halorhodospira halophila (strain DSM 244 / SL1) (Ectothiorhodospira halophila (strain DSM 244 / SL1)).